The chain runs to 245 residues: MYPVDLHMHTVASTHAYSTLHDYIAEAKRKGIKLFAITDHGPDMADAPHYWHFVNMRIWPRLVDGVGILRGIESNIKNIEGEIDCSGPMLTSLDLIIAGFHEPVFPPQDRDTHTQAMIAAMASGKVHMISHPGNPKFPVDIPAIAEAAARYQVALEINNSSFVSSRMGSEDNCRAIAAAVRDAGGWVALGSDSHTAFTLGEFTECRKILDAVDFPEERILNVSPRRLLNFLESRGMPAIPEFADL.

Zn(2+) contacts are provided by histidine 7, histidine 9, histidine 15, histidine 40, glutamate 73, histidine 101, histidine 131, aspartate 192, and histidine 194.

The protein belongs to the PHP family. Homotrimer. Zn(2+) serves as cofactor.

This Klebsiella pneumoniae subsp. pneumoniae (strain ATCC 700721 / MGH 78578) protein is Probable phosphatase KPN78578_10290.